A 255-amino-acid chain; its full sequence is Pimeloyl-[acyl-carrier protein] methyl ester esterase (255 aa).

Substrate contacts are provided by residues Trp-18, 78-79 (SL), and 139-143 (FLALD). Ser-78 acts as the Nucleophile in catalysis. Active-site residues include Asp-203 and His-233. Position 233 (His-233) interacts with substrate.

It belongs to the AB hydrolase superfamily. Carboxylesterase BioH family. As to quaternary structure, monomer.

It is found in the cytoplasm. The enzyme catalyses 6-carboxyhexanoyl-[ACP] methyl ester + H2O = 6-carboxyhexanoyl-[ACP] + methanol + H(+). It participates in cofactor biosynthesis; biotin biosynthesis. The physiological role of BioH is to remove the methyl group introduced by BioC when the pimeloyl moiety is complete. It allows to synthesize pimeloyl-ACP via the fatty acid synthetic pathway through the hydrolysis of the ester bonds of pimeloyl-ACP esters. The protein is Pimeloyl-[acyl-carrier protein] methyl ester esterase of Xylella fastidiosa (strain 9a5c).